Reading from the N-terminus, the 308-residue chain is 4-hydroxy-3-methylbut-2-enyl diphosphate reductase (308 aa).

Residue C13 coordinates [4Fe-4S] cluster. 2 residues coordinate (2E)-4-hydroxy-3-methylbut-2-enyl diphosphate: H42 and H75. Residues H42 and H75 each contribute to the dimethylallyl diphosphate site. Isopentenyl diphosphate contacts are provided by H42 and H75. C97 lines the [4Fe-4S] cluster pocket. H125 is a (2E)-4-hydroxy-3-methylbut-2-enyl diphosphate binding site. H125 provides a ligand contact to dimethylallyl diphosphate. H125 is an isopentenyl diphosphate binding site. The Proton donor role is filled by E127. T165 lines the (2E)-4-hydroxy-3-methylbut-2-enyl diphosphate pocket. C195 lines the [4Fe-4S] cluster pocket. (2E)-4-hydroxy-3-methylbut-2-enyl diphosphate contacts are provided by S223, S224, N225, and S267. The dimethylallyl diphosphate site is built by S223, S224, N225, and S267. Residues S223, S224, N225, and S267 each contribute to the isopentenyl diphosphate site.

Belongs to the IspH family. The cofactor is [4Fe-4S] cluster.

It carries out the reaction isopentenyl diphosphate + 2 oxidized [2Fe-2S]-[ferredoxin] + H2O = (2E)-4-hydroxy-3-methylbut-2-enyl diphosphate + 2 reduced [2Fe-2S]-[ferredoxin] + 2 H(+). The catalysed reaction is dimethylallyl diphosphate + 2 oxidized [2Fe-2S]-[ferredoxin] + H2O = (2E)-4-hydroxy-3-methylbut-2-enyl diphosphate + 2 reduced [2Fe-2S]-[ferredoxin] + 2 H(+). The protein operates within isoprenoid biosynthesis; dimethylallyl diphosphate biosynthesis; dimethylallyl diphosphate from (2E)-4-hydroxy-3-methylbutenyl diphosphate: step 1/1. It functions in the pathway isoprenoid biosynthesis; isopentenyl diphosphate biosynthesis via DXP pathway; isopentenyl diphosphate from 1-deoxy-D-xylulose 5-phosphate: step 6/6. In terms of biological role, catalyzes the conversion of 1-hydroxy-2-methyl-2-(E)-butenyl 4-diphosphate (HMBPP) into a mixture of isopentenyl diphosphate (IPP) and dimethylallyl diphosphate (DMAPP). Acts in the terminal step of the DOXP/MEP pathway for isoprenoid precursor biosynthesis. The sequence is that of 4-hydroxy-3-methylbut-2-enyl diphosphate reductase from Chlamydia muridarum (strain MoPn / Nigg).